We begin with the raw amino-acid sequence, 309 residues long: GTP cyclohydrolase MptA (309 aa).

This sequence belongs to the GTP cyclohydrolase IV family. In terms of assembly, homodimer. Fe(2+) serves as cofactor.

It carries out the reaction GTP + H2O = 7,8-dihydroneopterin 2',3'-cyclic phosphate + formate + diphosphate + H(+). It participates in cofactor biosynthesis; 5,6,7,8-tetrahydromethanopterin biosynthesis. Functionally, converts GTP to 7,8-dihydro-D-neopterin 2',3'-cyclic phosphate, the first intermediate in the biosynthesis of coenzyme methanopterin. The sequence is that of GTP cyclohydrolase MptA from Methanococcus aeolicus (strain ATCC BAA-1280 / DSM 17508 / OCM 812 / Nankai-3).